The sequence spans 515 residues: 2,3-bisphosphoglycerate-independent phosphoglycerate mutase (515 aa).

D14 and S63 together coordinate Mn(2+). The active site involves S63. Substrate is bound by residues H124, 154–155 (RD), R186, R192, 259–262 (RADR), and K334. Residues D401, H405, D442, H443, and H460 each coordinate Mn(2+).

Belongs to the BPG-independent phosphoglycerate mutase family. Requires Mg(2+) as cofactor. Mn(2+) is required as a cofactor.

The catalysed reaction is (2R)-2-phosphoglycerate = (2R)-3-phosphoglycerate. Its pathway is carbohydrate degradation; glycolysis; pyruvate from D-glyceraldehyde 3-phosphate: step 3/5. Activity is not affected by 2,3-bisphosphoglycerate. Catalyzes the interconversion of 2-phosphoglycerate and 3-phosphoglycerate. The protein is 2,3-bisphosphoglycerate-independent phosphoglycerate mutase of Brugia malayi (Filarial nematode worm).